Consider the following 433-residue polypeptide: Ribonuclease T2-like (433 aa).

Disulfide bonds link Cys28–Cys47, Cys36–Cys95, Cys46–Cys171, and Cys103–Cys163. N-linked (GlcNAc...) asparagine glycosylation is found at Asn38 and Asn71. Residues His88, Glu156, and His160 contribute to the active site. 2 N-linked (GlcNAc...) asparagine glycosylation sites follow: Asn221 and Asn263. Cysteines 247 and 283 form a disulfide.

This sequence belongs to the RNase T2 family.

The protein localises to the vacuole lumen. It localises to the cytoplasm. The catalysed reaction is a ribonucleotidyl-ribonucleotide-RNA + H2O = a 3'-end 3'-phospho-ribonucleotide-RNA + a 5'-end dephospho-ribonucleoside-RNA + H(+). In terms of biological role, rnase which modulates cell survival under stress conditions. Released from the vacuole to the cytoplasm during stress to promote tRNA and rRNA cleavage and to activate separately a downstream pathway that promotes cell death. Involved in cell size, vacuolar morphology and growth at high temperatures and high salt concentration. This is Ribonuclease T2-like (RNY1) from Candida glabrata (strain ATCC 2001 / BCRC 20586 / JCM 3761 / NBRC 0622 / NRRL Y-65 / CBS 138) (Yeast).